The sequence spans 295 residues: Indole-3-glycerol phosphate synthase (295 aa).

This sequence belongs to the TrpC family.

The catalysed reaction is 1-(2-carboxyphenylamino)-1-deoxy-D-ribulose 5-phosphate + H(+) = (1S,2R)-1-C-(indol-3-yl)glycerol 3-phosphate + CO2 + H2O. It functions in the pathway amino-acid biosynthesis; L-tryptophan biosynthesis; L-tryptophan from chorismate: step 4/5. The chain is Indole-3-glycerol phosphate synthase from Synechococcus sp. (strain CC9605).